Here is a 254-residue protein sequence, read N- to C-terminus: 3-deoxy-manno-octulosonate cytidylyltransferase (254 aa).

This sequence belongs to the KdsB family.

The protein resides in the cytoplasm. The enzyme catalyses 3-deoxy-alpha-D-manno-oct-2-ulosonate + CTP = CMP-3-deoxy-beta-D-manno-octulosonate + diphosphate. The protein operates within nucleotide-sugar biosynthesis; CMP-3-deoxy-D-manno-octulosonate biosynthesis; CMP-3-deoxy-D-manno-octulosonate from 3-deoxy-D-manno-octulosonate and CTP: step 1/1. It participates in bacterial outer membrane biogenesis; lipopolysaccharide biosynthesis. Its function is as follows. Activates KDO (a required 8-carbon sugar) for incorporation into bacterial lipopolysaccharide in Gram-negative bacteria. This is 3-deoxy-manno-octulosonate cytidylyltransferase from Pseudomonas syringae pv. tomato (strain ATCC BAA-871 / DC3000).